The chain runs to 161 residues: Large ribosomal subunit protein uL10 (161 aa).

It belongs to the universal ribosomal protein uL10 family. As to quaternary structure, part of the ribosomal stalk of the 50S ribosomal subunit. The N-terminus interacts with L11 and the large rRNA to form the base of the stalk. The C-terminus forms an elongated spine to which L12 dimers bind in a sequential fashion forming a multimeric L10(L12)X complex.

Its function is as follows. Forms part of the ribosomal stalk, playing a central role in the interaction of the ribosome with GTP-bound translation factors. This is Large ribosomal subunit protein uL10 from Campylobacter curvus (strain 525.92).